Reading from the N-terminus, the 296-residue chain is Protease HtpX homolog (296 aa).

The next 2 membrane-spanning stretches (helical) occupy residues 14 to 34 and 38 to 58; these read VFLL…VGYL and SLVT…VIMI. A Zn(2+)-binding site is contributed by histidine 144. The active site involves glutamate 145. Histidine 148 is a binding site for Zn(2+). Transmembrane regions (helical) follow at residues 159 to 179 and 198 to 218; these read IALA…NWWL and LLVF…AAVI. Residue glutamate 227 participates in Zn(2+) binding.

Belongs to the peptidase M48B family. The cofactor is Zn(2+).

It localises to the cell membrane. The chain is Protease HtpX homolog from Leuconostoc citreum (strain KM20).